The primary structure comprises 233 residues: Large ribosomal subunit protein uL1 (233 aa).

The protein belongs to the universal ribosomal protein uL1 family. In terms of assembly, part of the 50S ribosomal subunit.

Binds directly to 23S rRNA. The L1 stalk is quite mobile in the ribosome, and is involved in E site tRNA release. Its function is as follows. Protein L1 is also a translational repressor protein, it controls the translation of the L11 operon by binding to its mRNA. This Zymomonas mobilis subsp. mobilis (strain ATCC 31821 / ZM4 / CP4) protein is Large ribosomal subunit protein uL1.